A 503-amino-acid chain; its full sequence is MDFSIKGCDWSKGEAKGFLTGKSDCIVLGIFEAQTLSGAALDIDTATKGLISRVVKAGDMDGKRGKTLFLHEVSGIGASRVLLVGLGKQDAFNQKAYTDAVTAAWRALLSTKIVQVTFTLAQLPVDERSSDWGVRAAILALRNETYRFTQMKSKPEPASHTLKRVVFSVDPADEKAAKLAVKQAVALANGMDLTRDLGNLPGNVCTPTYLGNTAKKIAKDWGLKAEVLGLKQIQALNMGSFLSVARASVEPPQFIVLHYQGAAAKAAPVVLVGKGITFDTGGISLKPGEAMDEMKYDMCGAGSVLGTMRAVAEMGLKINVVAIVPTCENMPGGNATKPGDIVTSMKGLTIEVLNTDAEGRLILCDALTYAERFKPAAVIDVATLTGACVIALGAHNSGLFSKDDALAGELLDASREANDPAWRMPLDDEYQDQLKSNFADIANIGGRPAGAVTAACFLSRFTDSYPWAHLDIAGTAWKGGAAKGATGRPVPLLAQFLIDRAGQ.

Residues K274 and D279 each coordinate Mn(2+). Residue K286 is part of the active site. Mn(2+)-binding residues include D297, D356, and E358. R360 is an active-site residue.

This sequence belongs to the peptidase M17 family. Mn(2+) serves as cofactor.

It localises to the cytoplasm. The enzyme catalyses Release of an N-terminal amino acid, Xaa-|-Yaa-, in which Xaa is preferably Leu, but may be other amino acids including Pro although not Arg or Lys, and Yaa may be Pro. Amino acid amides and methyl esters are also readily hydrolyzed, but rates on arylamides are exceedingly low.. It catalyses the reaction Release of an N-terminal amino acid, preferentially leucine, but not glutamic or aspartic acids.. Functionally, presumably involved in the processing and regular turnover of intracellular proteins. Catalyzes the removal of unsubstituted N-terminal amino acids from various peptides. The chain is Probable cytosol aminopeptidase from Burkholderia ambifaria (strain MC40-6).